Reading from the N-terminus, the 431-residue chain is UDP-N-acetylglucosamine 1-carboxyvinyltransferase (431 aa).

25–26 (KN) serves as a coordination point for phosphoenolpyruvate. Residue Arg101 participates in UDP-N-acetyl-alpha-D-glucosamine binding. The active-site Proton donor is Cys125. Residue Cys125 is modified to 2-(S-cysteinyl)pyruvic acid O-phosphothioketal. Residues Asp317 and Ile339 each contribute to the UDP-N-acetyl-alpha-D-glucosamine site.

It belongs to the EPSP synthase family. MurA subfamily.

The protein localises to the cytoplasm. The enzyme catalyses phosphoenolpyruvate + UDP-N-acetyl-alpha-D-glucosamine = UDP-N-acetyl-3-O-(1-carboxyvinyl)-alpha-D-glucosamine + phosphate. The protein operates within cell wall biogenesis; peptidoglycan biosynthesis. Functionally, cell wall formation. Adds enolpyruvyl to UDP-N-acetylglucosamine. The polypeptide is UDP-N-acetylglucosamine 1-carboxyvinyltransferase (Thermobifida fusca (strain YX)).